A 388-amino-acid polypeptide reads, in one-letter code: Chorismate synthase (388 aa).

NADP(+) is bound by residues Arg-39 and Arg-45. Residues 130 to 132 (RSS), 251 to 252 (NA), Ala-296, 311 to 315 (KPIPT), and Arg-337 contribute to the FMN site.

This sequence belongs to the chorismate synthase family. Homotetramer. FMNH2 is required as a cofactor.

The catalysed reaction is 5-O-(1-carboxyvinyl)-3-phosphoshikimate = chorismate + phosphate. It functions in the pathway metabolic intermediate biosynthesis; chorismate biosynthesis; chorismate from D-erythrose 4-phosphate and phosphoenolpyruvate: step 7/7. Functionally, catalyzes the anti-1,4-elimination of the C-3 phosphate and the C-6 proR hydrogen from 5-enolpyruvylshikimate-3-phosphate (EPSP) to yield chorismate, which is the branch point compound that serves as the starting substrate for the three terminal pathways of aromatic amino acid biosynthesis. This reaction introduces a second double bond into the aromatic ring system. In Streptococcus equi subsp. zooepidemicus (strain H70), this protein is Chorismate synthase.